Reading from the N-terminus, the 498-residue chain is Lysine--tRNA ligase (498 aa).

The Mg(2+) site is built by Glu-407 and Glu-414.

This sequence belongs to the class-II aminoacyl-tRNA synthetase family. As to quaternary structure, homodimer. Mg(2+) serves as cofactor.

The protein resides in the cytoplasm. It catalyses the reaction tRNA(Lys) + L-lysine + ATP = L-lysyl-tRNA(Lys) + AMP + diphosphate. The sequence is that of Lysine--tRNA ligase from Rhizobium etli (strain ATCC 51251 / DSM 11541 / JCM 21823 / NBRC 15573 / CFN 42).